An 80-amino-acid chain; its full sequence is Defensin-like protein 50 (80 aa).

The N-terminal stretch at 1 to 27 (MGFTKIVVTFFLVVMLAVSSSSQNAMA) is a signal peptide. 4 disulfide bridges follow: Cys39–Cys79, Cys43–Cys66, Cys52–Cys77, and Cys56–Cys78.

This sequence belongs to the DEFL family.

The protein resides in the secreted. The sequence is that of Defensin-like protein 50 (LCR49) from Arabidopsis thaliana (Mouse-ear cress).